A 635-amino-acid polypeptide reads, in one-letter code: Factor of DNA methylation 2 (635 aa).

The stretch at 289–471 (LDEKKNLHQA…ESMNSVLMTK (183 aa)) forms a coiled coil. Residues 350-365 (ELERQKLDEDKRKSDA) are compositionally biased toward basic and acidic residues. The disordered stretch occupies residues 350 to 376 (ELERQKLDEDKRKSDAMNKSLQLASRE).

As to quaternary structure, forms a complex with IDN2 and FMD1/INDL1. In terms of tissue distribution, highly expressed in flowers and at lower levels in roots, leaves and stems.

Its function is as follows. Forms a complex with IDN2 and FDM1/IDNL1 that is required for RNA-directed DNA methylation (RdDM) and that functions at a downstream step of the RdDM pathway. The polypeptide is Factor of DNA methylation 2 (Arabidopsis thaliana (Mouse-ear cress)).